Here is a 974-residue protein sequence, read N- to C-terminus: UvrABC system protein A (974 aa).

34-41 (GLSGSGKS) serves as a coordination point for ATP. ABC transporter domains are found at residues 331–610 (WARS…TNSL) and 630–959 (ISKT…QFLK). 663–670 (GVSGGGKS) lines the ATP pocket. The C4-type zinc finger occupies 762–788 (CEACQGDGVIKIEMHFLPDVYVTCDVC).

It belongs to the ABC transporter superfamily. UvrA family. As to quaternary structure, forms a heterotetramer with UvrB during the search for lesions.

The protein resides in the cytoplasm. The UvrABC repair system catalyzes the recognition and processing of DNA lesions. UvrA is an ATPase and a DNA-binding protein. A damage recognition complex composed of 2 UvrA and 2 UvrB subunits scans DNA for abnormalities. When the presence of a lesion has been verified by UvrB, the UvrA molecules dissociate. The sequence is that of UvrABC system protein A from Brucella melitensis biotype 1 (strain ATCC 23456 / CCUG 17765 / NCTC 10094 / 16M).